The sequence spans 162 residues: UPF0260 protein Atu0932 (162 aa).

It belongs to the UPF0260 family.

The protein is UPF0260 protein Atu0932 of Agrobacterium fabrum (strain C58 / ATCC 33970) (Agrobacterium tumefaciens (strain C58)).